The following is a 464-amino-acid chain: L-cystine uptake protein TcyP (464 aa).

10 consecutive transmembrane segments (helical) span residues 3–23 (TLLV…LYYM), 34–54 (VFTA…IYEP), 73–93 (YVKL…ISAF), 107–127 (GLII…GIAA), 184–204 (PTST…FIGV), 225–245 (IVMR…LALM), 263–283 (FVLA…LLIA), 347–367 (AGIY…IDPL), 371–391 (FILT…GVGG), and 395–415 (FAAL…ALVI).

It belongs to the dicarboxylate/amino acid:cation symporter (DAACS) (TC 2.A.23) family.

The protein resides in the membrane. Functionally, mediates uptake of L-cystine, the oxidized form of L-cysteine. The protein is L-cystine uptake protein TcyP of Bacillus thuringiensis (strain Al Hakam).